The chain runs to 661 residues: MSAAETNQVQESLEKLNLDSSSSPAAGGATTATTTNNAESSDATSSSVPADSAEEQGESSGIAENSASLYVGELNPSVNEATLFEIFSPIGQVASIRVCRDAVSKKSLGYAYVNYHKLEDGEKAIEELNYTPVEGRPCRIMWSQRDPSARRSGDGNIFIKNLHPAIDNKALHDTFSAFGKILSVKVATDDLGQSKCFGFVHYETEEAAQAAIESVNGMLLNDREVYVGKHVSKKDRESKLEEMKANYTNIYVKNIDLAYTEKEFEELFAPFGKITSIYLEKDAEGKSKGFGFVNFEEHEAAAKAVEELNDKEINGQKIYVGRAQKKRERTEELKKQYEAVRLEKLSKYQGVNLFVKNLDEQIDSEKLEEEFKPFGTITSSKVMVDDAGKSKGFGFVCFSTPEEATKAITEMNQRMVNGKPLYVALAQRKDVRRSQLEQQIQARNQMRMQNAAAAGGLPGQFMPPMFYGQQGFFPPNGRGNAPFPGPNPQMMMRGRGQPFPEQWPRPGPNGQPVPVYGMPPQFQDFNGQNMRPQQQQQQQQQQQQQQQQQRGYYPNRPAGGNVPAKDLAALIANAPLEAQKRILGEELYQRIVATGKAQEPEAAGKITGMMLGLENQEILDLLDDEELFNNHFEEALNAFEEYKNSEGANAATGAPAPSEEA.

The segment covering 1-11 has biased composition (polar residues); sequence MSAAETNQVQE. A disordered region spans residues 1 to 61; that stretch reads MSAAETNQVQ…SAEEQGESSG (61 aa). The segment covering 20–51 has biased composition (low complexity); sequence SSSSPAAGGATTATTTNNAESSDATSSSVPAD. RRM domains follow at residues 67–145, 155–232, 248–325, and 351–428; these read ASLY…WSQR, GNIF…KHVS, TNIY…RAQK, and VNLF…LAQR. The segment at 473 to 563 is disordered; sequence FPPNGRGNAP…PNRPAGGNVP (91 aa). Residues 501–511 show a composition bias toward pro residues; that stretch reads EQWPRPGPNGQ. Polar residues predominate over residues 523 to 532; that stretch reads QDFNGQNMRP. Residues 533–549 are compositionally biased toward low complexity; the sequence is QQQQQQQQQQQQQQQQQ. The 82-residue stretch at 563–644 folds into the PABC domain; sequence PAKDLAALIA…ALNAFEEYKN (82 aa).

The protein belongs to the polyadenylate-binding protein type-1 family.

Its subcellular location is the cytoplasm. It is found in the nucleus. Its function is as follows. Binds the poly(A) tail of mRNA. Appears to be an important mediator of the multiple roles of the poly(A) tail in mRNA biogenesis, stability and translation. In the nucleus, involved in both mRNA cleavage and polyadenylation. Is also required for efficient mRNA export to the cytoplasm. Acts in concert with a poly(A)-specific nuclease (PAN) to affect poly(A) tail shortening, which may occur concomitantly with either nucleocytoplasmic mRNA transport or translational initiation. In the cytoplasm, stimulates translation initiation and regulates mRNA decay through translation termination-coupled poly(A) shortening, probably mediated by PAN. The polypeptide is Polyadenylate-binding protein, cytoplasmic and nuclear (PAB1) (Lodderomyces elongisporus (strain ATCC 11503 / CBS 2605 / JCM 1781 / NBRC 1676 / NRRL YB-4239) (Yeast)).